Consider the following 264-residue polypeptide: Short chain dehydrogenase/reductase AacuN (264 aa).

NADP(+) contacts are provided by I24, D70, N97, and R130. Residues S146, S147, and Y161 each act as proton donor in the active site. NADP(+) is bound by residues Y161, K165, and T196. K165 acts as the Lowers pKa of active site Tyr in catalysis.

This sequence belongs to the short-chain dehydrogenases/reductases (SDR) family.

The catalysed reaction is 3,8,9,10-tetrahydroxy-6-methyl-1,4-dihydroanthracen-1-one + NADPH + H(+) = (3R)-3,8,9,10-tetrahydroxy-6-methyl-1,2,3,4-tetrahydroanthracen-1-one + NADP(+). The protein operates within secondary metabolite biosynthesis. Atrochrysone carboxylic acid synthase; part of the gene cluster that mediates the biosynthesis of the tetrahydroxanthone dimer secalonic acid D. The pathway begins with the synthesis of atrochrysone thioester by the polyketide synthase AacuL. The atrochrysone carboxyl ACP thioesterase AacuM then breaks the thioester bond and releases the atrochrysone carboxylic acid from AacuL. Atrochrysone carboxylic acid is decarboxylated by the decarboxylase AacuI, and oxidized by the anthrone oxygenase AacuG to yield emodin. Emodin is then reduced to emodin hydroquinone by a yet unidentified oxidoreductase. A-ring reduction by the short chain dehydrogenase AacuN, dehydration by the scytalone dehydratase-like protein AacuK and probable spontaneous re-oxidation, results in overall deoxygenation to chrysophanol. Baeyer-Villiger oxidation by the Baeyer-Villiger monooxygenase (BVMO) AacuH then yields monodictyphenone. Monodictyphenone is transformed into compounds with the tetrahydroxanthone skeleton via methylesterification by the methyltransferase AacuQ, followed by the action of the flavin-dependent monooxygenase AacuC, the isomerase AacuP, and the short chain dehydrogenase/reductase AacuF or AacuD. AacuF and AacuD should accept the same compound as a substrate but perform the ketoreduction with a different stereoselectivity, thus yielding blennolides B and A, respectively. In the final step of the biosynthesis, the cytochrome P450 monooxygenase AacuE accepts blennolide B and/or blennolide A to conduct the dimerization reaction to furnish the tetrahydroxanthone dimers, secalonic acids D, B, and F. In Aspergillus aculeatus (strain ATCC 16872 / CBS 172.66 / WB 5094), this protein is Short chain dehydrogenase/reductase AacuN.